Consider the following 753-residue polypeptide: Synaptotagmin-like protein 5 (753 aa).

The RabBD domain maps to 7–123 (FINLSFLLDH…IISGEWFLEE (117 aa)). The FYVE-type zinc finger occupies 64-106 (CVHCQKSLGLIFDRGAPCQACSLRVCSECRVTGLDGSWKCTVC). Disordered stretches follow at residues 145–188 (RRSP…GFLL), 221–283 (SFKS…GFEN), and 298–359 (TKSH…LNSL). S147 carries the phosphoserine modification. Residues 224 to 238 (SVSGSDRGSTTSSDL) are compositionally biased toward low complexity. 2 stretches are compositionally biased toward polar residues: residues 260–275 (TQRS…TSIS) and 305–316 (TSGTPSIAVSGT). C2 domains follow at residues 429 to 550 (VTGE…DEWF) and 590 to 717 (PQGK…VDWM).

Binds RAB27A that has been activated by GTP-binding.

The protein resides in the membrane. Its function is as follows. May act as Rab effector protein and play a role in vesicle trafficking. Binds phospholipids. The chain is Synaptotagmin-like protein 5 (Sytl5) from Rattus norvegicus (Rat).